The following is an 842-amino-acid chain: Molybdenum cofactor sulfurase (842 aa).

Residue Lys236 is modified to N6-(pyridoxal phosphate)lysine. Cys402 is an active-site residue. The disordered stretch occupies residues 637-680; it reads PGSQHGDAQRSSKARLQKHQITTDQESDVQEVHPGSGTTTDSTW. Residues 663–831 enclose the MOSC domain; the sequence is SDVQEVHPGS…AARGDVAYPT (169 aa).

It belongs to the class-V pyridoxal-phosphate-dependent aminotransferase family. MOCOS subfamily. It depends on pyridoxal 5'-phosphate as a cofactor.

It catalyses the reaction Mo-molybdopterin + L-cysteine + AH2 = thio-Mo-molybdopterin + L-alanine + A + H2O. It participates in cofactor biosynthesis; molybdopterin biosynthesis. Its function is as follows. Sulfurates the molybdenum cofactor. Sulfation of molybdenum is essential for xanthine dehydrogenase (XDH) and aldehyde oxidase (ADO) enzymes in which molybdenum cofactor is liganded by 1 oxygen and 1 sulfur atom in active form. In Pyricularia oryzae (strain 70-15 / ATCC MYA-4617 / FGSC 8958) (Rice blast fungus), this protein is Molybdenum cofactor sulfurase.